A 745-amino-acid polypeptide reads, in one-letter code: ATP-dependent zinc metalloprotease FtsH (745 aa).

Topologically, residues 1 to 11 are cytoplasmic; that stretch reads MNNRRNGLFRN. The chain crosses the membrane as a helical span at residues 12–32; that stretch reads SLFYILMFLSLMGIIYFFFGG. The Extracellular portion of the chain corresponds to 33–131; sequence NSGSQTQNIR…VTAKAEESSG (99 aa). A helical membrane pass occupies residues 132–152; the sequence is IWVTLLMYIAPVILMLFLFYM. At 153–745 the chain is on the cytoplasmic side; sequence MMGQAGQGGG…SSQDDTNSQA (593 aa). Residue 227–234 coordinates ATP; the sequence is GPPGTGKT. His-449 is a Zn(2+) binding site. Glu-450 is a catalytic residue. His-453 and Asp-525 together coordinate Zn(2+). Positions 630 to 673 are enriched in basic and acidic residues; the sequence is MPEKDSNEFPSEKAATFEESKRELERREAEKHAQNQSADDKQAD. A disordered region spans residues 630 to 745; sequence MPEKDSNEFP…SSQDDTNSQA (116 aa). Low complexity predominate over residues 690-704; that stretch reads SESDASSEVSADSSV. Residues 705 to 745 show a composition bias toward polar residues; the sequence is NSTANSATESATDSDVATSATGLPNAESATPSSQDDTNSQA.

This sequence in the central section; belongs to the AAA ATPase family. In the C-terminal section; belongs to the peptidase M41 family. Homohexamer. The cofactor is Zn(2+).

The protein resides in the cell membrane. Its function is as follows. Acts as a processive, ATP-dependent zinc metallopeptidase for both cytoplasmic and membrane proteins. Plays a role in the quality control of integral membrane proteins. The polypeptide is ATP-dependent zinc metalloprotease FtsH (Lactiplantibacillus plantarum (strain ATCC BAA-793 / NCIMB 8826 / WCFS1) (Lactobacillus plantarum)).